Consider the following 215-residue polypeptide: Programmed cell death protein 10 homolog (215 aa).

The protein belongs to the PDCD10 family. Interacts with gck-1. In terms of tissue distribution, expressed in pharynx, intestine, germline, vulva and excretory canals.

It localises to the cytoplasm. Its subcellular location is the apical cell membrane. Functionally, involved in excretory canal elongation during postembryonic development. Plays a role in promoting Golgi stability, ER integrity and vesicle transport probably by regulating the activation of Rho GTPase cdc-42. Involved in fertility. The protein is Programmed cell death protein 10 homolog of Caenorhabditis elegans.